The sequence spans 207 residues: Superoxide dismutase [Mn] (207 aa).

Mn(2+) is bound by residues histidine 30, histidine 78, aspartate 166, and histidine 170.

It belongs to the iron/manganese superoxide dismutase family. As to quaternary structure, homodimer. Mn(2+) serves as cofactor.

The catalysed reaction is 2 superoxide + 2 H(+) = H2O2 + O2. Its function is as follows. Destroys superoxide anion radicals which are normally produced within the cells and which are toxic to biological systems. In Chlamydia pneumoniae (Chlamydophila pneumoniae), this protein is Superoxide dismutase [Mn] (sodA).